We begin with the raw amino-acid sequence, 216 residues long: MOB kinase activator 3B (216 aa).

Positions 82, 87, 164, and 169 each coordinate Zn(2+).

Functionally, modulates LATS1 expression in the Hippo signaling pathway which plays a pivotal role in organ size control and tumor suppression by restricting proliferation and promoting apoptosis. The sequence is that of MOB kinase activator 3B (Mob3b) from Mus musculus (Mouse).